Reading from the N-terminus, the 131-residue chain is uncharacterized protein (131 aa).

Residues 26 to 124 (CSVEVAVNEI…WGKMYGSHQE (99 aa)) form the HTH hxlR-type domain.

This is an uncharacterized protein from Methanothermobacter thermautotrophicus (strain ATCC 29096 / DSM 1053 / JCM 10044 / NBRC 100330 / Delta H) (Methanobacterium thermoautotrophicum).